We begin with the raw amino-acid sequence, 20 residues long: Lysozyme (20 aa).

As to quaternary structure, monomer.

It localises to the secreted. It carries out the reaction Hydrolysis of (1-&gt;4)-beta-linkages between N-acetylmuramic acid and N-acetyl-D-glucosamine residues in a peptidoglycan and between N-acetyl-D-glucosamine residues in chitodextrins.. In terms of biological role, has bacteriolytic activity. The chain is Lysozyme from Lysobacter sp. (strain XL1).